We begin with the raw amino-acid sequence, 287 residues long: Hydroxysteroid 11-beta-dehydrogenase 1-like protein (287 aa).

The first 22 residues, 1–22 (MKLYAKLLLCSICVAFIAVRWS), serve as a signal peptide directing secretion. Residues 40–66 (GAST…TARR), 91–92 (DM), and 118–120 (NHI) each bind NADP(+). Residue serine 169 participates in substrate binding. Tyrosine 182 serves as the catalytic Proton acceptor. Residues 182 to 186 (YASTK) and 215 to 221 (GLIDTDS) contribute to the NADP(+) site.

Belongs to the short-chain dehydrogenases/reductases (SDR) family.

The protein resides in the secreted. The enzyme catalyses cortisone + NADPH + H(+) = cortisol + NADP(+). Unidirectional NADP(+)-dependent cortisol dehydrogenase (in vitro). The sequence is that of Hydroxysteroid 11-beta-dehydrogenase 1-like protein (hsd11b1l) from Danio rerio (Zebrafish).